The following is a 234-amino-acid chain: Large ribosomal subunit protein bL25 (234 aa).

Belongs to the bacterial ribosomal protein bL25 family. CTC subfamily. As to quaternary structure, part of the 50S ribosomal subunit; part of the 5S rRNA/L5/L18/L25 subcomplex. Contacts the 5S rRNA. Binds to the 5S rRNA independently of L5 and L18.

In terms of biological role, this is one of the proteins that binds to the 5S RNA in the ribosome where it forms part of the central protuberance. The polypeptide is Large ribosomal subunit protein bL25 (Rhodopseudomonas palustris (strain BisA53)).